The primary structure comprises 350 residues: Histidinol-phosphate aminotransferase 1 (350 aa).

The residue at position 210 (Lys210) is an N6-(pyridoxal phosphate)lysine.

It belongs to the class-II pyridoxal-phosphate-dependent aminotransferase family. Histidinol-phosphate aminotransferase subfamily. Homodimer. Requires pyridoxal 5'-phosphate as cofactor.

The enzyme catalyses L-histidinol phosphate + 2-oxoglutarate = 3-(imidazol-4-yl)-2-oxopropyl phosphate + L-glutamate. The protein operates within amino-acid biosynthesis; L-histidine biosynthesis; L-histidine from 5-phospho-alpha-D-ribose 1-diphosphate: step 7/9. In Pseudomonas fluorescens (strain ATCC BAA-477 / NRRL B-23932 / Pf-5), this protein is Histidinol-phosphate aminotransferase 1.